We begin with the raw amino-acid sequence, 308 residues long: Homoserine kinase (308 aa).

Residue 85–95 participates in ATP binding; it reads PLTRGLGSSAA.

Belongs to the GHMP kinase family. Homoserine kinase subfamily.

The protein localises to the cytoplasm. The enzyme catalyses L-homoserine + ATP = O-phospho-L-homoserine + ADP + H(+). Its pathway is amino-acid biosynthesis; L-threonine biosynthesis; L-threonine from L-aspartate: step 4/5. In terms of biological role, catalyzes the ATP-dependent phosphorylation of L-homoserine to L-homoserine phosphate. The polypeptide is Homoserine kinase (Caldicellulosiruptor saccharolyticus (strain ATCC 43494 / DSM 8903 / Tp8T 6331)).